Consider the following 563-residue polypeptide: Formate--tetrahydrofolate ligase (563 aa).

65–72 (TPLGEGKT) provides a ligand contact to ATP.

The protein belongs to the formate--tetrahydrofolate ligase family.

It carries out the reaction (6S)-5,6,7,8-tetrahydrofolate + formate + ATP = (6R)-10-formyltetrahydrofolate + ADP + phosphate. Its pathway is one-carbon metabolism; tetrahydrofolate interconversion. In Cutibacterium acnes (strain DSM 16379 / KPA171202) (Propionibacterium acnes), this protein is Formate--tetrahydrofolate ligase.